A 290-amino-acid polypeptide reads, in one-letter code: Shikimate dehydrogenase (NADP(+)) (290 aa).

Residues 22–24 (SLS) and Thr-68 contribute to the shikimate site. Lys-72 functions as the Proton acceptor in the catalytic mechanism. Shikimate is bound by residues Asn-93 and Asp-108. Residues 133-137 (GSGGS) and Ile-228 contribute to the NADP(+) site. Position 230 (Tyr-230) interacts with shikimate. An NADP(+)-binding site is contributed by Gly-251.

It belongs to the shikimate dehydrogenase family. As to quaternary structure, homodimer.

The catalysed reaction is shikimate + NADP(+) = 3-dehydroshikimate + NADPH + H(+). It participates in metabolic intermediate biosynthesis; chorismate biosynthesis; chorismate from D-erythrose 4-phosphate and phosphoenolpyruvate: step 4/7. In terms of biological role, involved in the biosynthesis of the chorismate, which leads to the biosynthesis of aromatic amino acids. Catalyzes the reversible NADPH linked reduction of 3-dehydroshikimate (DHSA) to yield shikimate (SA). This chain is Shikimate dehydrogenase (NADP(+)), found in Leptospira borgpetersenii serovar Hardjo-bovis (strain JB197).